The chain runs to 141 residues: Nucleoside diphosphate kinase (141 aa).

6 residues coordinate ATP: Lys11, Phe59, Arg87, Thr93, Arg104, and Asn114. Catalysis depends on His117, which acts as the Pros-phosphohistidine intermediate.

This sequence belongs to the NDK family. In terms of assembly, homotetramer. Mg(2+) serves as cofactor.

The protein resides in the cytoplasm. It carries out the reaction a 2'-deoxyribonucleoside 5'-diphosphate + ATP = a 2'-deoxyribonucleoside 5'-triphosphate + ADP. The catalysed reaction is a ribonucleoside 5'-diphosphate + ATP = a ribonucleoside 5'-triphosphate + ADP. In terms of biological role, major role in the synthesis of nucleoside triphosphates other than ATP. The ATP gamma phosphate is transferred to the NDP beta phosphate via a ping-pong mechanism, using a phosphorylated active-site intermediate. This Cupriavidus metallidurans (strain ATCC 43123 / DSM 2839 / NBRC 102507 / CH34) (Ralstonia metallidurans) protein is Nucleoside diphosphate kinase.